The chain runs to 426 residues: Serine--tRNA ligase (426 aa).

Threonine 233–glutamate 235 contributes to the L-serine binding site. Residue arginine 264 to glutamate 266 participates in ATP binding. Glutamate 287 serves as a coordination point for L-serine. Residue glutamate 351 to serine 354 coordinates ATP. Serine 387 is an L-serine binding site.

This sequence belongs to the class-II aminoacyl-tRNA synthetase family. Type-1 seryl-tRNA synthetase subfamily. As to quaternary structure, homodimer. The tRNA molecule binds across the dimer.

It localises to the cytoplasm. The catalysed reaction is tRNA(Ser) + L-serine + ATP = L-seryl-tRNA(Ser) + AMP + diphosphate + H(+). The enzyme catalyses tRNA(Sec) + L-serine + ATP = L-seryl-tRNA(Sec) + AMP + diphosphate + H(+). It functions in the pathway aminoacyl-tRNA biosynthesis; selenocysteinyl-tRNA(Sec) biosynthesis; L-seryl-tRNA(Sec) from L-serine and tRNA(Sec): step 1/1. Functionally, catalyzes the attachment of serine to tRNA(Ser). Is also able to aminoacylate tRNA(Sec) with serine, to form the misacylated tRNA L-seryl-tRNA(Sec), which will be further converted into selenocysteinyl-tRNA(Sec). The sequence is that of Serine--tRNA ligase from Clostridium botulinum (strain Okra / Type B1).